A 337-amino-acid chain; its full sequence is Anthranilate phosphoribosyltransferase (337 aa).

Residues Gly-81, 84–85 (GD), Ser-89, 91–94 (NVST), 109–117 (KHGNRALSS), and Ala-121 each bind 5-phospho-alpha-D-ribose 1-diphosphate. Gly-81 contacts anthranilate. Ser-93 contacts Mg(2+). Residue Asn-112 participates in anthranilate binding. Arg-167 is an anthranilate binding site. Positions 226 and 227 each coordinate Mg(2+).

The protein belongs to the anthranilate phosphoribosyltransferase family. As to quaternary structure, homodimer. Mg(2+) serves as cofactor.

It carries out the reaction N-(5-phospho-beta-D-ribosyl)anthranilate + diphosphate = 5-phospho-alpha-D-ribose 1-diphosphate + anthranilate. Its pathway is amino-acid biosynthesis; L-tryptophan biosynthesis; L-tryptophan from chorismate: step 2/5. Its function is as follows. Catalyzes the transfer of the phosphoribosyl group of 5-phosphorylribose-1-pyrophosphate (PRPP) to anthranilate to yield N-(5'-phosphoribosyl)-anthranilate (PRA). This chain is Anthranilate phosphoribosyltransferase, found in Nitrobacter hamburgensis (strain DSM 10229 / NCIMB 13809 / X14).